Here is an 807-residue protein sequence, read N- to C-terminus: AP-5 complex subunit zeta-1 (807 aa).

In terms of assembly, probably part of the adaptor protein complex 5 (AP-5) a tetramer composed of AP5B1, AP5M1, AP5S1 and AP5Z1. Interacts with ZFYVE26 and SPG11.

It is found in the cytoplasm. The protein localises to the nucleus. As part of AP-5, a probable fifth adaptor protein complex it may be involved in endosomal transport. According to PubMed:20613862 it is a putative helicase required for efficient homologous recombination DNA double-strand break repair. This Homo sapiens (Human) protein is AP-5 complex subunit zeta-1 (AP5Z1).